Consider the following 203-residue polypeptide: Adenylyl-sulfate kinase (203 aa).

Gly35–Ser42 lines the ATP pocket. The Phosphoserine intermediate role is filled by Ser109.

The protein belongs to the APS kinase family.

It carries out the reaction adenosine 5'-phosphosulfate + ATP = 3'-phosphoadenylyl sulfate + ADP + H(+). It functions in the pathway sulfur metabolism; hydrogen sulfide biosynthesis; sulfite from sulfate: step 2/3. In terms of biological role, catalyzes the synthesis of activated sulfate. This chain is Adenylyl-sulfate kinase, found in Geotalea daltonii (strain DSM 22248 / JCM 15807 / FRC-32) (Geobacter daltonii).